The sequence spans 895 residues: MAALRLPTPPPPRAPAPWLHSSHRRRVAAPRGAGGGGGGGGAVPPPPVRTLLIDNYDSYTYNIFQELSVVNGVPPVVVRNDEWTWRDVYRWVYKERAFDNIVISPGPGSPACPSDIGIGLRILCECGDIPILGVCLGHQALGFVHGAKIVHAPEAIHGRLSELEHNGCYLFNHIPSGINSGFKVVRYHSLVIEPDSLSEDLISIAWTASPKMLSFLESDKPDITSSTLWGSLDNLFVTNQSECSTTDGKMPSINDASELDGYRVLMGVRHSTRPHYGVQFHPESVATHYGRQIFQNFKKITTDFGLQTPLLQERKVHSIGKLERSQISSPDLKNFVANDLLHSARLKLWDSVGPCALPKRSSGDKCLRLQWKKIDNFLNRIGGSENIFSVLFGHHSAEDTFWLDSSSVDQNRARFSFMGGKGGPLWKQMTFHLASQRANCGGNLTIRDAYGCTVRNFLKDGFLDFLDKEMQSIQYIEKDYEGLPFDFHGGFVGYIGYGLKVECDASSNSAKSSTPDACFFFADNLVVVDHNNGDVYILSLHDEYSSGNGDGDYQNSIHSLWLANTEKKLLRMDAMAPRLSINGNSSINGNSFTISSSVNKQRFVIEKSKDEYIRDVQSCLDYIRDGESYELCLTTQMKRRTDYMDALKLYLKLRKQNPAPYAAWLNFSSENLSICCSSPERFLRLDRNAILEAKPIKGTIARGRTPEEDECLRLQLKYSEKDQAENLMIVDLLRNDLGKVCEPGSVHVPRLMDVESYKTVHTMVSTIRGTKMSDLSPVDCVKAAFPGGSMTGAPKVRSMEILDSLETSPRGIYSGSVGFFSYNKTFDLNIVIRTVVLHNGEASIGAGGAIVALSDPEAEYNEMLLKAKAPTKVVEECSQQIYNPDRSDSMQTTVS.

Residues 1 to 45 form a disordered region; the sequence is MAALRLPTPPPPRAPAPWLHSSHRRRVAAPRGAGGGGGGGGAVPP. The N-terminal 48 residues, 1–48, are a transit peptide targeting the chloroplast; that stretch reads MAALRLPTPPPPRAPAPWLHSSHRRRVAAPRGAGGGGGGGGAVPPPPV. The span at 32-42 shows a compositional bias: gly residues; it reads GAGGGGGGGGA. The Glutamine amidotransferase type-1 domain occupies 49–307; the sequence is RTLLIDNYDS…KKITTDFGLQ (259 aa). The active-site Nucleophile is the Cys-135. Catalysis depends on residues His-281 and Glu-283. The segment at 387 to 875 is PABB component; the sequence is IFSVLFGHHS…KAKAPTKVVE (489 aa).

It in the C-terminal section; belongs to the anthranilate synthase component I family.

It localises to the plastid. Its subcellular location is the chloroplast. It catalyses the reaction chorismate + L-glutamine = 4-amino-4-deoxychorismate + L-glutamate. It functions in the pathway cofactor biosynthesis; tetrahydrofolate biosynthesis; 4-aminobenzoate from chorismate: step 1/2. Its pathway is antibiotic biosynthesis; candicidin biosynthesis. In terms of biological role, bifunctional enzyme that catalyzes the biosynthesis of 4-amino-4-deoxychorismate (ADC) from chorismate and glutamine. In the first step, a glutamine amidotransferase generates ammonia that is channelled between the binding sites of glutamine and chorismate and used along with chorismate in the second step, catalyzed by aminodeoxychorismate synthase, to produce ADC. Required for the synthesis of 4-aminobenzoate (PABA), an important component in tetrahydrofolate biosynthesis. Does not possess ADC lyase activity. This Oryza sativa subsp. japonica (Rice) protein is Probable aminodeoxychorismate synthase, chloroplastic (ADCS).